The following is a 427-amino-acid chain: Peptidase B (427 aa).

2 residues coordinate Mn(2+): Lys-195 and Asp-200. Lys-207 is a catalytic residue. Residues Asp-218, Asp-277, and Glu-279 each contribute to the Mn(2+) site. The active site involves Arg-281.

It belongs to the peptidase M17 family. Homohexamer. The cofactor is Mn(2+).

The protein localises to the cytoplasm. It catalyses the reaction Release of an N-terminal amino acid, Xaa, from a peptide or arylamide. Xaa is preferably Glu or Asp but may be other amino acids, including Leu, Met, His, Cys and Gln.. Probably plays an important role in intracellular peptide degradation. This chain is Peptidase B, found in Citrobacter koseri (strain ATCC BAA-895 / CDC 4225-83 / SGSC4696).